Reading from the N-terminus, the 496-residue chain is Glycerol kinase (496 aa).

An ADP-binding site is contributed by Thr12. 3 residues coordinate ATP: Thr12, Thr13, and Ser14. Thr12 serves as a coordination point for sn-glycerol 3-phosphate. Arg16 is an ADP binding site. 3 residues coordinate sn-glycerol 3-phosphate: Arg82, Glu83, and Tyr134. Glycerol-binding residues include Arg82, Glu83, and Tyr134. His230 is modified (phosphohistidine; by HPr). Asp244 is a binding site for sn-glycerol 3-phosphate. The glycerol site is built by Asp244 and Gln245. Residues Thr266 and Gly309 each coordinate ADP. ATP-binding residues include Thr266, Gly309, Gln313, and Gly410. Residues Gly410 and Asn414 each contribute to the ADP site.

This sequence belongs to the FGGY kinase family. In terms of assembly, homotetramer and homodimer (in equilibrium). Post-translationally, the phosphoenolpyruvate-dependent sugar phosphotransferase system (PTS), including enzyme I, and histidine-containing protein (HPr) are required for the phosphorylation, which leads to the activation of the enzyme.

It carries out the reaction glycerol + ATP = sn-glycerol 3-phosphate + ADP + H(+). It functions in the pathway polyol metabolism; glycerol degradation via glycerol kinase pathway; sn-glycerol 3-phosphate from glycerol: step 1/1. Activated by phosphorylation and inhibited by fructose 1,6-bisphosphate (FBP). Key enzyme in the regulation of glycerol uptake and metabolism. Catalyzes the phosphorylation of glycerol to yield sn-glycerol 3-phosphate. The sequence is that of Glycerol kinase from Bacillus cytotoxicus (strain DSM 22905 / CIP 110041 / 391-98 / NVH 391-98).